A 393-amino-acid polypeptide reads, in one-letter code: S-adenosylmethionine synthase (393 aa).

An ATP-binding site is contributed by His17. A Mg(2+)-binding site is contributed by Asp19. Position 45 (Glu45) interacts with K(+). 2 residues coordinate L-methionine: Glu58 and Gln104. The interval 104 to 114 (QSAEIAQGVEE) is flexible loop. Residues 171–173 (DAK), Asp245, 251–252 (RK), Ala268, and Lys272 contribute to the ATP site. Asp245 contacts L-methionine. L-methionine is bound at residue Lys276.

The protein belongs to the AdoMet synthase family. Homotetramer; dimer of dimers. Mg(2+) is required as a cofactor. It depends on K(+) as a cofactor.

The protein localises to the cytoplasm. It carries out the reaction L-methionine + ATP + H2O = S-adenosyl-L-methionine + phosphate + diphosphate. The protein operates within amino-acid biosynthesis; S-adenosyl-L-methionine biosynthesis; S-adenosyl-L-methionine from L-methionine: step 1/1. In terms of biological role, catalyzes the formation of S-adenosylmethionine (AdoMet) from methionine and ATP. The overall synthetic reaction is composed of two sequential steps, AdoMet formation and the subsequent tripolyphosphate hydrolysis which occurs prior to release of AdoMet from the enzyme. This is S-adenosylmethionine synthase from Hyphomonas neptunium (strain ATCC 15444).